We begin with the raw amino-acid sequence, 571 residues long: Cytosolic Fe-S cluster assembly factor NAR1 (571 aa).

The [4Fe-4S] cluster site is built by Cys20, Cys62, Cys65, Cys68, Cys204, and Cys259. The disordered stretch occupies residues 415-437 (AKPSRMPGGKPIGSARRPNGKAS). Residues Cys449 and Cys453 each contribute to the [4Fe-4S] cluster site.

It belongs to the NARF family.

Its function is as follows. Component of the cytosolic Fe/S protein assembly machinery. Required for maturation of extramitochondrial Fe/S proteins. May play a role in the transfer of pre-assembled Fe/S clusters to target apoproteins. The chain is Cytosolic Fe-S cluster assembly factor NAR1 (NAR1) from Sclerotinia sclerotiorum (strain ATCC 18683 / 1980 / Ss-1) (White mold).